A 309-amino-acid chain; its full sequence is Tumor necrosis factor ligand superfamily member 13B (309 aa).

Over 1–47 (MDESAKTLPPPCLCFCSEKGEDMKVGYDPITPQKEEGAWFGICRDGR) the chain is Cytoplasmic. The chain crosses the membrane as a helical; Signal-anchor for type II membrane protein span at residues 48-68 (LLAATLLLALLSSSFTAMSLY). Residues 69–309 (QLAALQADLM…DTFFGALKLL (241 aa)) are Extracellular-facing. Positions 110-140 (PAAPRPHNSSRGHRNRRAFQGPEETEQDVDL) are disordered. N-linked (GlcNAc...) asparagine glycans are attached at residues Asn-117 and Asn-266. Residues 117–126 (NSSRGHRNRR) show a composition bias toward basic residues. The region spanning 169–308 (DCLQLIADSD…DDTFFGALKL (140 aa)) is the THD domain. Residues Cys-256 and Cys-269 are joined by a disulfide bond.

This sequence belongs to the tumor necrosis factor family. In terms of assembly, homotrimer. Isoform 2 heteromultimerizes with isoform 1, probably limiting the amount of functional isoform 1 on the cell surface. Post-translationally, the soluble form derives from the membrane form by proteolytic processing. Isoform 2 is not efficiently shed from the membrane unlike isoform 1. Isoform 2 is expressed in many myeloid cell lines.

It is found in the cell membrane. Its subcellular location is the secreted. Its function is as follows. Cytokine that binds to TNFRSF13B/TACI and TNFRSF17/BCMA. TNFSF13/APRIL binds to the same 2 receptors. Together, they form a 2 ligands -2 receptors pathway involved in the stimulation of B- and T-cell function and the regulation of humoral immunity. A third B-cell specific BAFF-receptor (BAFFR/BR3) promotes the survival of mature B-cells and the B-cell response. In terms of biological role, isoform 2 seems to inhibit isoform 1 secretion and bioactivity. This Mus musculus (Mouse) protein is Tumor necrosis factor ligand superfamily member 13B (Tnfsf13b).